A 146-amino-acid polypeptide reads, in one-letter code: Large ribosomal subunit protein uL15 (146 aa).

The disordered stretch occupies residues 1–46 (MLHQIKPFKGARKTVKRLGRGCGSGTGKTSGKGHKGQLARSGGGVR). A compositionally biased stretch (basic residues) spans 9-19 (KGARKTVKRLG). Positions 20 to 30 (RGCGSGTGKTS) are enriched in gly residues.

It belongs to the universal ribosomal protein uL15 family. As to quaternary structure, part of the 50S ribosomal subunit.

In terms of biological role, binds to the 23S rRNA. The chain is Large ribosomal subunit protein uL15 from Phytoplasma mali (strain AT).